A 431-amino-acid polypeptide reads, in one-letter code: Divergent protein kinase domain 1B (431 aa).

At 1 to 30 (MRRLRRLVHLVLLCPFSKGLQGRLPGLRVK) the chain is on the cytoplasmic side. A May mediate ER retention motif is present at residues 5 to 6 (RR). The chain crosses the membrane as a helical span at residues 31–51 (YVLLVWLGIFVGSWMVYVHYS). At 52–431 (SYSELCRGHV…WREISNTNYS (380 aa)) the chain is on the lumenal side. Disulfide bonds link C57-C94 and C62-C117.

This sequence belongs to the DIPK family. In terms of processing, among the many cysteines in the lumenal domain, most are probably involved in disulfide bonds. Expressed in kidney, testis, lung, heart, stomach, intestine, pancreas, liver and salivary gland. Strongly expressed in acute pancreatitis, brain, and in peripheral endothelial cells.

Its subcellular location is the endoplasmic reticulum membrane. The protein is Divergent protein kinase domain 1B (Dipk1b) of Mus musculus (Mouse).